The sequence spans 98 residues: Large ribosomal subunit protein uL23 (98 aa).

Belongs to the universal ribosomal protein uL23 family. As to quaternary structure, part of the 50S ribosomal subunit. Contacts protein L29, and trigger factor when it is bound to the ribosome.

Its function is as follows. One of the early assembly proteins it binds 23S rRNA. One of the proteins that surrounds the polypeptide exit tunnel on the outside of the ribosome. Forms the main docking site for trigger factor binding to the ribosome. In Teredinibacter turnerae (strain ATCC 39867 / T7901), this protein is Large ribosomal subunit protein uL23.